We begin with the raw amino-acid sequence, 337 residues long: Holliday junction branch migration complex subunit RuvB (337 aa).

The interval 1 to 20 is disordered; that stretch reads MQTRFVSPVNHDEEQDEPSV. Residues 1 to 181 form a large ATPase domain (RuvB-L) region; sequence MQTRFVSPVN…FGIILRLDLY (181 aa). ATP is bound by residues Arg21, Gly62, Lys65, Thr66, Thr67, 128–130, Arg171, Tyr181, and Arg218; that span reads EDY. A Mg(2+)-binding site is contributed by Thr66. The small ATPAse domain (RuvB-S) stretch occupies residues 182–252; sequence DPSELTVIVT…IANTALFALG (71 aa). The head domain (RuvB-H) stretch occupies residues 255–337; that stretch reads QKGLDILDRR…SHTRDLTSFL (83 aa). Residues Arg310 and Arg315 each coordinate DNA.

It belongs to the RuvB family. In terms of assembly, homohexamer. Forms an RuvA(8)-RuvB(12)-Holliday junction (HJ) complex. HJ DNA is sandwiched between 2 RuvA tetramers; dsDNA enters through RuvA and exits via RuvB. An RuvB hexamer assembles on each DNA strand where it exits the tetramer. Each RuvB hexamer is contacted by two RuvA subunits (via domain III) on 2 adjacent RuvB subunits; this complex drives branch migration. In the full resolvosome a probable DNA-RuvA(4)-RuvB(12)-RuvC(2) complex forms which resolves the HJ.

It is found in the cytoplasm. The catalysed reaction is ATP + H2O = ADP + phosphate + H(+). Functionally, the RuvA-RuvB-RuvC complex processes Holliday junction (HJ) DNA during genetic recombination and DNA repair, while the RuvA-RuvB complex plays an important role in the rescue of blocked DNA replication forks via replication fork reversal (RFR). RuvA specifically binds to HJ cruciform DNA, conferring on it an open structure. The RuvB hexamer acts as an ATP-dependent pump, pulling dsDNA into and through the RuvAB complex. RuvB forms 2 homohexamers on either side of HJ DNA bound by 1 or 2 RuvA tetramers; 4 subunits per hexamer contact DNA at a time. Coordinated motions by a converter formed by DNA-disengaged RuvB subunits stimulates ATP hydrolysis and nucleotide exchange. Immobilization of the converter enables RuvB to convert the ATP-contained energy into a lever motion, pulling 2 nucleotides of DNA out of the RuvA tetramer per ATP hydrolyzed, thus driving DNA branch migration. The RuvB motors rotate together with the DNA substrate, which together with the progressing nucleotide cycle form the mechanistic basis for DNA recombination by continuous HJ branch migration. Branch migration allows RuvC to scan DNA until it finds its consensus sequence, where it cleaves and resolves cruciform DNA. The protein is Holliday junction branch migration complex subunit RuvB of Methanospirillum hungatei JF-1 (strain ATCC 27890 / DSM 864 / NBRC 100397 / JF-1).